Consider the following 183-residue polypeptide: Threonylcarbamoyl-AMP synthase (183 aa).

In terms of domain architecture, YrdC-like spans 1 to 183 (MNIQQIVEQL…LFTHQLFRQG (183 aa)).

This sequence belongs to the SUA5 family. TsaC subfamily.

It localises to the cytoplasm. It carries out the reaction L-threonine + hydrogencarbonate + ATP = L-threonylcarbamoyladenylate + diphosphate + H2O. Functionally, required for the formation of a threonylcarbamoyl group on adenosine at position 37 (t(6)A37) in tRNAs that read codons beginning with adenine. Catalyzes the conversion of L-threonine, HCO(3)(-)/CO(2) and ATP to give threonylcarbamoyl-AMP (TC-AMP) as the acyladenylate intermediate, with the release of diphosphate. This chain is Threonylcarbamoyl-AMP synthase, found in Pasteurella multocida (strain Pm70).